The chain runs to 342 residues: Ribosomal RNA small subunit methyltransferase C (342 aa).

It belongs to the methyltransferase superfamily. RsmC family. As to quaternary structure, monomer.

It is found in the cytoplasm. It carries out the reaction guanosine(1207) in 16S rRNA + S-adenosyl-L-methionine = N(2)-methylguanosine(1207) in 16S rRNA + S-adenosyl-L-homocysteine + H(+). Specifically methylates the guanine in position 1207 of 16S rRNA in the 30S particle. The chain is Ribosomal RNA small subunit methyltransferase C from Salmonella enteritidis PT4 (strain P125109).